The sequence spans 125 residues: Calcitonin receptor-stimulating peptide 1 (125 aa).

Positions 1-25 (MGFWKFPPFLVLSILVLYQAGMFHA) are cleaved as a signal peptide. A propeptide spanning residues 26-77 (APFRSVFDGRFDPATLDEEESRLLLAAMVNDYEQMRTRESEKAQKTEGSRIQ) is cleaved from the precursor. Cysteines 81 and 86 form a disulfide.

The protein belongs to the calcitonin family.

The protein resides in the secreted. Stimulates cAMP production via the calcitonin receptor (CT) but not via the CT-like (CL) receptor. The protein is Calcitonin receptor-stimulating peptide 1 (CRSP1) of Ovis aries (Sheep).